Reading from the N-terminus, the 419-residue chain is BTB/POZ domain-containing protein KCTD20 (419 aa).

Positions 117–191 (EKVTLLVDGT…YKTGIINCPD (75 aa)) constitute a BTB domain.

Interacts with AKT1; AKT2 and AKT3. Interacts with PPP2CA and PPP1CA. Part of a complex containing MARK4. In terms of tissue distribution, ubiquitously expressed.

It localises to the cytoplasm. Promotes the phosphorylation of AKT family members. The sequence is that of BTB/POZ domain-containing protein KCTD20 (Kctd20) from Mus musculus (Mouse).